Here is a 248-residue protein sequence, read N- to C-terminus: Probable transcriptional regulatory protein Dde_2325 (248 aa).

The segment covering 1-15 (MAGHSKWKNIQHRKG) has biased composition (basic residues). The tract at residues 1-22 (MAGHSKWKNIQHRKGRQDAKKS) is disordered.

It belongs to the TACO1 family.

The protein localises to the cytoplasm. This chain is Probable transcriptional regulatory protein Dde_2325, found in Oleidesulfovibrio alaskensis (strain ATCC BAA-1058 / DSM 17464 / G20) (Desulfovibrio alaskensis).